A 708-amino-acid polypeptide reads, in one-letter code: Assimilatory nitrate reductase (708 aa).

Residues 15-73 (TKQVPTTCMRCAVGCGHVHLGSENAYGLETVRGDPSHPVNNGLACGRGIRESADPAGEW) form the 4Fe-4S Mo/W bis-MGD-type domain. Residues Cys22, Cys25, Cys29, and Cys59 each coordinate [4Fe-4S] cluster. The interval 586 to 613 (TTGREADGYNTGVRSRSDTPEEPVARVN) is disordered.

The protein belongs to the prokaryotic molybdopterin-containing oxidoreductase family. NasA/NapA/NarB subfamily. In terms of assembly, is probably a monomer. Initially characterized as a dimer of proteins with a MW of 105 and 50 kDa. [4Fe-4S] cluster serves as cofactor. Requires Mo-bis(molybdopterin guanine dinucleotide) as cofactor.

The protein resides in the cytoplasm. The catalysed reaction is nitrite + 2 oxidized [2Fe-2S]-[ferredoxin] + H2O = nitrate + 2 reduced [2Fe-2S]-[ferredoxin] + 2 H(+). It functions in the pathway nitrogen metabolism; nitrate reduction (assimilation). Its activity is regulated as follows. Inhibited by cyanide and azide. Nitrate reductase is a key enzyme involved in the first step of nitrate assimilation. Catalyzes the reduction of nitrate to nitrite, using ferredoxin as the electron donor. Can use reduced methyl viologen but neither NADPH nor NADH as electron donors. In Haloferax mediterranei (strain ATCC 33500 / DSM 1411 / JCM 8866 / NBRC 14739 / NCIMB 2177 / R-4) (Halobacterium mediterranei), this protein is Assimilatory nitrate reductase.